A 300-amino-acid polypeptide reads, in one-letter code: Porphobilinogen deaminase (300 aa).

Cys239 carries the post-translational modification S-(dipyrrolylmethanemethyl)cysteine.

Belongs to the HMBS family. As to quaternary structure, monomer. Requires dipyrromethane as cofactor.

The catalysed reaction is 4 porphobilinogen + H2O = hydroxymethylbilane + 4 NH4(+). It participates in porphyrin-containing compound metabolism; protoporphyrin-IX biosynthesis; coproporphyrinogen-III from 5-aminolevulinate: step 2/4. Functionally, tetrapolymerization of the monopyrrole PBG into the hydroxymethylbilane pre-uroporphyrinogen in several discrete steps. In Francisella tularensis subsp. holarctica (strain FTNF002-00 / FTA), this protein is Porphobilinogen deaminase.